A 788-amino-acid chain; its full sequence is Autophagy-related protein 9 (788 aa).

Topologically, residues 1-171 (MTDKSTFLSV…EAYMYYTGKG (171 aa)) are cytoplasmic. Over residues 32-42 (ILRRVEEEHAQ) the composition is skewed to basic and acidic residues. The segment at 32 to 127 (ILRRVEEEHA…TGVANGGLPR (96 aa)) is disordered. Positions 44–58 (SDNSNSDNDSGNDSD) are enriched in low complexity. Residues 101 to 112 (SFAQGTKTQTPI) are compositionally biased toward polar residues. A helical transmembrane segment spans residues 172–192 (LVSIILSRVLNMSTIMFVVVF). Over 193–222 (STYLGSCIDYSKIKGSRTLDEVHVKQCYAK) the chain is Lumenal. The helical transmembrane segment at 223 to 243 (LGSFHVFVLWTFFVLWFMKLF) threads the bilayer. The Cytoplasmic segment spans residues 244–390 (QYVKDIRRLV…QILSTGLRRR (147 aa)). Residue F391 is an intramembrane region. Residues 392–479 (VFAAIMNVVF…PKEKTALVSK (88 aa)) lie on the Cytoplasmic side of the membrane. Residues 480–500 (FVSFIAGSFAAVLGIASLIDP) traverse the membrane as a helical segment. The Lumenal portion of the chain corresponds to 501 to 512 (ELFLMFEISANR). The chain crosses the membrane as a helical span at residues 513–533 (TVLFYIGVFGSILAVSRSLIP). Residues 534-579 (EETLVFDPEISLRYVAEFTHYLPPEWEGKLHTEQVKNEFSLMYEMR) are Cytoplasmic-facing. The stretch at 580–600 (LIILLKELASIFLAPFILYYS) is an intramembrane region. The Cytoplasmic portion of the chain corresponds to 601–788 (LTQSCDDIVD…KKTDNMNLGA (188 aa)). The tract at residues 715-736 (LSPAAPTATTATSGTATGAAPR) is disordered. Residues 716 to 734 (SPAAPTATTATSGTATGAA) are compositionally biased toward low complexity.

This sequence belongs to the ATG9 family. In terms of assembly, homotrimer; forms a homotrimer with a central pore that forms a path between the two membrane leaflets. Phosphorylated by ATG1. ATG1 phosphorylation is required for preautophagosome elongation.

The protein resides in the preautophagosomal structure membrane. It is found in the cytoplasmic vesicle membrane. Its subcellular location is the golgi apparatus membrane. The protein localises to the endoplasmic reticulum membrane. The catalysed reaction is a 1,2-diacyl-sn-glycero-3-phosphocholine(in) = a 1,2-diacyl-sn-glycero-3-phosphocholine(out). The enzyme catalyses a 1,2-diacyl-sn-glycero-3-phospho-L-serine(in) = a 1,2-diacyl-sn-glycero-3-phospho-L-serine(out). It carries out the reaction a 1,2-diacyl-sn-glycero-3-phosphoethanolamine(in) = a 1,2-diacyl-sn-glycero-3-phosphoethanolamine(out). It catalyses the reaction a 1,2-diacyl-sn-glycero-3-phospho-(1D-myo-inositol-3-phosphate)(in) = a 1,2-diacyl-sn-glycero-3-phospho-(1D-myo-inositol-3-phosphate)(out). Functionally, phospholipid scramblase involved in autophagy and cytoplasm to vacuole transport (Cvt) vesicle formation. Cycles between the preautophagosomal structure/phagophore assembly site (PAS) and the cytoplasmic vesicle pool and supplies membrane for the growing autophagosome. Lipid scramblase activity plays a key role in preautophagosomal structure/phagophore assembly by distributing the phospholipids that arrive through ATG2 from the cytoplasmic to the luminal leaflet of the bilayer, thereby driving autophagosomal membrane expansion. Required for mitophagy. Also involved in endoplasmic reticulum-specific autophagic process and is essential for the survival of cells subjected to severe ER stress. Different machineries are required for anterograde trafficking to the PAS during either the Cvt pathway or bulk autophagy and for retrograde trafficking. This is Autophagy-related protein 9 from Yarrowia lipolytica (strain CLIB 122 / E 150) (Yeast).